The following is a 179-amino-acid chain: Large ribosomal subunit protein uL5 (179 aa).

It belongs to the universal ribosomal protein uL5 family. In terms of assembly, part of the 50S ribosomal subunit; part of the 5S rRNA/L5/L18/L25 subcomplex. Contacts the 5S rRNA and the P site tRNA. Forms a bridge to the 30S subunit in the 70S ribosome.

In terms of biological role, this is one of the proteins that bind and probably mediate the attachment of the 5S RNA into the large ribosomal subunit, where it forms part of the central protuberance. In the 70S ribosome it contacts protein S13 of the 30S subunit (bridge B1b), connecting the 2 subunits; this bridge is implicated in subunit movement. Contacts the P site tRNA; the 5S rRNA and some of its associated proteins might help stabilize positioning of ribosome-bound tRNAs. The chain is Large ribosomal subunit protein uL5 from Polaromonas naphthalenivorans (strain CJ2).